The chain runs to 378 residues: Chaperone protein DnaJ (378 aa).

The J domain occupies 5–70; it reads DYYEVLSVSR…DKKAAYDQFG (66 aa). The CR-type zinc finger occupies 133–211; that stretch reads GLTKELRIPT…CHGEGRVEKS (79 aa). Zn(2+) is bound by residues Cys146, Cys149, Cys163, Cys166, Cys185, Cys188, Cys199, and Cys202. 4 CXXCXGXG motif repeats span residues 146-153, 163-170, 185-192, and 199-206; these read CDSCDGSG, CGTCHGQG, CPTCHGRG, and CNKCHGEG.

It belongs to the DnaJ family. Homodimer. The cofactor is Zn(2+).

It is found in the cytoplasm. Functionally, participates actively in the response to hyperosmotic and heat shock by preventing the aggregation of stress-denatured proteins and by disaggregating proteins, also in an autonomous, DnaK-independent fashion. Unfolded proteins bind initially to DnaJ; upon interaction with the DnaJ-bound protein, DnaK hydrolyzes its bound ATP, resulting in the formation of a stable complex. GrpE releases ADP from DnaK; ATP binding to DnaK triggers the release of the substrate protein, thus completing the reaction cycle. Several rounds of ATP-dependent interactions between DnaJ, DnaK and GrpE are required for fully efficient folding. Also involved, together with DnaK and GrpE, in the DNA replication of plasmids through activation of initiation proteins. This is Chaperone protein DnaJ from Shewanella sediminis (strain HAW-EB3).